The sequence spans 700 residues: Polyribonucleotide nucleotidyltransferase (700 aa).

Residues aspartate 485 and aspartate 491 each contribute to the Mg(2+) site. One can recognise a KH domain in the interval 552-611 (PRITVIKINPEKIRDVIGKGGAVIRALTEETGTTIELEDDGTVKIASSNGEATKEAIRRI). One can recognise an S1 motif domain in the interval 621 to 689 (GRIYNGKVIR…RQGRVRLSIK (69 aa)).

The protein belongs to the polyribonucleotide nucleotidyltransferase family. In terms of assembly, component of the RNA degradosome, which is a multiprotein complex involved in RNA processing and mRNA degradation. Mg(2+) serves as cofactor.

It localises to the cytoplasm. The catalysed reaction is RNA(n+1) + phosphate = RNA(n) + a ribonucleoside 5'-diphosphate. Its function is as follows. Involved in mRNA degradation. Catalyzes the phosphorolysis of single-stranded polyribonucleotides processively in the 3'- to 5'-direction. This is Polyribonucleotide nucleotidyltransferase from Shewanella baltica (strain OS155 / ATCC BAA-1091).